We begin with the raw amino-acid sequence, 120 residues long: Synaptobrevin (120 aa).

Positions 1–38 (MSAPPSGPAPDAQGGAPGQPTGPPGAPPNTTSNRRLQQ) are disordered. The Cytoplasmic segment spans residues 1–98 (MSAPPSGPAP…KRKYWWKNCK (98 aa)). The span at 29 to 38 (NTTSNRRLQQ) shows a compositional bias: polar residues. The 61-residue stretch at 35–95 (RLQQTQAQVE…AKLKRKYWWK (61 aa)) folds into the v-SNARE coiled-coil homology domain. Residues 99–118 (MMIMLGGIGAIIVIVIIIYF) traverse the membrane as a helical; Anchor for type IV membrane protein segment. Topologically, residues 119–120 (FT) are vesicular.

The protein belongs to the synaptobrevin family. In terms of tissue distribution, nervous system specific.

It localises to the cytoplasmic vesicle. Its subcellular location is the secretory vesicle. The protein localises to the synaptic vesicle membrane. The protein resides in the synapse. It is found in the synaptosome. Its function is as follows. This protein may play a role in packaging, transport or release of neurotransmitters. The protein is Synaptobrevin of Tetronarce californica (Pacific electric ray).